A 669-amino-acid polypeptide reads, in one-letter code: Small ribosomal subunit protein mS39 (669 aa).

Residues 1–13 constitute a mitochondrion transit peptide; the sequence is MAAPCVRLGSVRC. 11 PPR repeats span residues 129 to 163, 164 to 199, 209 to 239, 240 to 274, 275 to 314, 315 to 351, 352 to 392, 396 to 430, 438 to 472, 473 to 507, and 556 to 590; these read IEGV…GTAP, SLET…DDQD, RPGQ…MPER, NAHS…RLTA, DVQT…NVRP, NLLT…NIEP, SLGT…FTLR, DVYF…DNRG, QSTY…LYYP, NSRG…GHSN, and SSAS…HRVP. A disordered region spans residues 186 to 218; it reads DIQTSEQNQQDDQDQQETEDSKKRPGQYRKASE. Over residues 194–203 the composition is skewed to acidic residues; the sequence is QQDDQDQQET. Residues 648-669 form a disordered region; the sequence is EDLQKSHSSSSSSSESSDSDRE. Residues 653-663 are compositionally biased toward low complexity; sequence SHSSSSSSSES.

The protein belongs to the mitochondrion-specific ribosomal protein mS39 family.

It localises to the mitochondrion. Mitochondrial protein that may have a role in mitochondrial translation. The chain is Small ribosomal subunit protein mS39 (ptcd3) from Xenopus laevis (African clawed frog).